The sequence spans 204 residues: RNA-free ribonuclease P (204 aa).

The protein belongs to the HARP family.

The catalysed reaction is Endonucleolytic cleavage of RNA, removing 5'-extranucleotides from tRNA precursor.. RNA-free RNase P that catalyzes the removal of the 5'-leader sequence from pre-tRNA to produce the mature 5'-terminus. This Pyrococcus abyssi (strain GE5 / Orsay) protein is RNA-free ribonuclease P.